The primary structure comprises 493 residues: Adenylyltransferase and sulfurtransferase uba4 (493 aa).

ATP-binding positions include Gly99, Asp120, 127-131 (SNLHR), Lys144, and 188-189 (DN). Zn(2+) contacts are provided by Cys237 and Cys240. The Glycyl thioester intermediate; for adenylyltransferase activity role is filled by Cys254. Zn(2+) contacts are provided by Cys316 and Cys319. The region spanning 376–491 (INKEPTIIDV…WREQIDPDWP (116 aa)) is the Rhodanese domain. Cys446 serves as the catalytic Cysteine persulfide intermediate; for sulfurtransferase activity.

In the N-terminal section; belongs to the HesA/MoeB/ThiF family. UBA4 subfamily. It depends on Zn(2+) as a cofactor.

The protein resides in the cytoplasm. Its subcellular location is the cytosol. The catalysed reaction is [molybdopterin-synthase sulfur-carrier protein]-C-terminal Gly-Gly + ATP + H(+) = [molybdopterin-synthase sulfur-carrier protein]-C-terminal Gly-Gly-AMP + diphosphate. It catalyses the reaction [molybdopterin-synthase sulfur-carrier protein]-C-terminal Gly-Gly-AMP + S-sulfanyl-L-cysteinyl-[cysteine desulfurase] + AH2 = [molybdopterin-synthase sulfur-carrier protein]-C-terminal-Gly-aminoethanethioate + L-cysteinyl-[cysteine desulfurase] + A + AMP + 2 H(+). Its pathway is tRNA modification; 5-methoxycarbonylmethyl-2-thiouridine-tRNA biosynthesis. The protein operates within cofactor biosynthesis; molybdopterin biosynthesis. Functionally, plays a central role in 2-thiolation of mcm(5)S(2)U at tRNA wobble positions of cytosolic tRNA(Lys), tRNA(Glu) and tRNA(Gln). Also essential during biosynthesis of the molybdenum cofactor. Acts by mediating the C-terminal thiocarboxylation of sulfur carriers urm1 and mocs2a. Its N-terminus first activates urm1 and mocs2a as acyl-adenylates (-COAMP), then the persulfide sulfur on the catalytic cysteine is transferred to urm1 and mocs2a to form thiocarboxylation (-COSH) of their C-terminus. The reaction probably involves hydrogen sulfide that is generated from the persulfide intermediate and that acts as a nucleophile towards urm1 and mocs2a. Subsequently, a transient disulfide bond is formed. Does not use thiosulfate as sulfur donor; nfs1 probably acting as a sulfur donor for thiocarboxylation reactions. The sequence is that of Adenylyltransferase and sulfurtransferase uba4 from Aspergillus fumigatus (strain CBS 144.89 / FGSC A1163 / CEA10) (Neosartorya fumigata).